The primary structure comprises 154 residues: Superoxide dismutase [Cu-Zn] (154 aa).

Cu cation-binding residues include His-47, His-49, and His-64. A disulfide bond links Cys-58 and Cys-147. The Zn(2+) site is built by His-64, His-72, His-81, and Asp-84. His-121 serves as a coordination point for Cu cation. Positions 125 to 136 (DDLGKGGNEESL) are enriched in basic and acidic residues. The interval 125–144 (DDLGKGGNEESLKTGNAGPR) is disordered. Arg-144 serves as a coordination point for substrate.

It belongs to the Cu-Zn superoxide dismutase family. Homodimer. Cu cation serves as cofactor. It depends on Zn(2+) as a cofactor.

Its subcellular location is the cytoplasm. It carries out the reaction 2 superoxide + 2 H(+) = H2O2 + O2. In terms of biological role, destroys radicals which are normally produced within the cells and which are toxic to biological systems. The protein is Superoxide dismutase [Cu-Zn] (sod-1) of Neurospora crassa (strain ATCC 24698 / 74-OR23-1A / CBS 708.71 / DSM 1257 / FGSC 987).